Reading from the N-terminus, the 186-residue chain is Peptidyl-tRNA hydrolase (186 aa).

TRNA is bound at residue tyrosine 13. The active-site Proton acceptor is the histidine 18. TRNA is bound by residues tyrosine 59, asparagine 61, and asparagine 107.

The protein belongs to the PTH family. Monomer.

The protein resides in the cytoplasm. The enzyme catalyses an N-acyl-L-alpha-aminoacyl-tRNA + H2O = an N-acyl-L-amino acid + a tRNA + H(+). Hydrolyzes ribosome-free peptidyl-tRNAs (with 1 or more amino acids incorporated), which drop off the ribosome during protein synthesis, or as a result of ribosome stalling. Functionally, catalyzes the release of premature peptidyl moieties from peptidyl-tRNA molecules trapped in stalled 50S ribosomal subunits, and thus maintains levels of free tRNAs and 50S ribosomes. This is Peptidyl-tRNA hydrolase from Thermotoga petrophila (strain ATCC BAA-488 / DSM 13995 / JCM 10881 / RKU-1).